The chain runs to 102 residues: Carboxysome shell protein CcmK2 (102 aa).

A BMC domain is found at 4–90; sequence AVGMIETLGF…PHENLEYVLP (87 aa).

It belongs to the bacterial microcompartments protein family. CcmK subfamily. In terms of assembly, homohexamer. Interacts with CcmO in the carboxysome. Interacts with CcmN.

It is found in the carboxysome. In terms of biological role, one of the shell proteins of the carboxysome, a polyhedral inclusion where RuBisCO (ribulose bisphosphate carboxylase, rbcL-rbcS) is sequestered. Assembles into hexamers which make sheets that form the facets of the polyhedral carboxysome. The hexamer central pore probably regulates metabolite flux. The major shell protein of the carboxysome, a polyhedral inclusion where RuBisCO (ribulose bisphosphate carboxylase, rbcL-rbcS) is sequestered. Hexamers make sheets that form the facets of the polyhedral carboxysome. The shell is 4.5 nm thick, as observed for CcmK hexamers. Required for recruitment of CcmO to the pre-carboxysome. In PCC 7942 there are several CcmK paralogs with presumably functional differences; replacing the central pore residues (34-37) with those of either CcmK4 from this organism (Tyr-Met-Arg-Ala) or from an alpha-type carboxysome forming cyanobacterium (CsoS1 of P.marinus strain MIT 9313, Arg-Glu-Phe-Val) allows the bacterium to make carboxysomes, but the expression level is too low to know if the carboxysome is functional for CO(2) fixation. Functionally, beta-carboxysome assembly initiates when soluble RuBisCO is condensed into a liquid matrix in a pre-carboxysome by the RbcS-like domains of probably both CcmM58 and CcmM35. CcmN interacts with the N-terminus of CcmM58, and then recruits the CcmK2 major shell protein via CcmN's encapsulation peptide. Shell formation requires CcmK proteins and CcmO. CcmL caps the otherwise elongated carboxysome. Once fully encapsulated carboxysomes are formed, they migrate within the cell probably via interactions with the cytoskeleton. This Synechococcus elongatus (strain ATCC 33912 / PCC 7942 / FACHB-805) (Anacystis nidulans R2) protein is Carboxysome shell protein CcmK2.